A 342-amino-acid chain; its full sequence is Dihydroorotase (342 aa).

Zn(2+) contacts are provided by H13 and H15. Substrate-binding positions include 15–17 (HLR) and N41. K98, H135, and H173 together coordinate Zn(2+). Position 98 is an N6-carboxylysine (K98). Residue H135 participates in substrate binding. L218 provides a ligand contact to substrate. A Zn(2+)-binding site is contributed by D246. Residue D246 is part of the active site. Substrate contacts are provided by H250 and A262.

This sequence belongs to the metallo-dependent hydrolases superfamily. DHOase family. Class II DHOase subfamily. As to quaternary structure, homodimer. Zn(2+) serves as cofactor.

It carries out the reaction (S)-dihydroorotate + H2O = N-carbamoyl-L-aspartate + H(+). It functions in the pathway pyrimidine metabolism; UMP biosynthesis via de novo pathway; (S)-dihydroorotate from bicarbonate: step 3/3. In terms of biological role, catalyzes the reversible cyclization of carbamoyl aspartate to dihydroorotate. This Photobacterium profundum (strain SS9) protein is Dihydroorotase.